Consider the following 220-residue polypeptide: Ras-related protein Rab-11B (220 aa).

18–25 (GDSGVGKS) is a binding site for GTP. Positions 40–48 (KLSTIGVEF) match the Effector region motif. Residues 66–70 (DTAGQ) and 124–127 (NKSD) contribute to the GTP site. Residues cysteine 219 and cysteine 220 are each lipidated (S-geranylgeranyl cysteine).

The protein belongs to the small GTPase superfamily. Rab family.

The protein localises to the cell membrane. The polypeptide is Ras-related protein Rab-11B (rab11B) (Dictyostelium discoideum (Social amoeba)).